The sequence spans 103 residues: Large ribosomal subunit protein bL21 (103 aa).

This sequence belongs to the bacterial ribosomal protein bL21 family. Part of the 50S ribosomal subunit. Contacts protein L20.

Functionally, this protein binds to 23S rRNA in the presence of protein L20. The protein is Large ribosomal subunit protein bL21 of Vibrio cholerae serotype O1 (strain ATCC 39541 / Classical Ogawa 395 / O395).